The primary structure comprises 471 residues: Putative multidrug resistance protein MdtD (471 aa).

A run of 13 helical transmembrane segments spans residues 12–32, 49–69, 77–97, 102–124, 138–158, 165–185, 195–215, 220–240, 263–283, 286–306, 329–351, 393–413, and 431–451; these read LWIVAFGFFMQSLDTTIVNTA, MIIVSYVLTVAVMLPASGWLA, IFFTAIVLFTAGSLFCAQAST, VMARVLQGVGGAMMVPVGRLTVM, FVTLPGQVGPLLGPALGGVLV, WIFLINIPVGIVGAIATLCLM, FDLSGFLLLAAGMATLTLALD, LGISPAWLAGLVAVGLCALLL, FSLGLGGSFAGRIGSGMLPFM, VFLQIGLGFSPFHAGLMMIPM, VLVASTLGLAAVSLLFMFSALAG, LLSMVMQLSMSIGVTIAGLLL, and VFLYTYLSMAAIIALPALIFS.

This sequence belongs to the major facilitator superfamily. TCR/Tet family.

The protein resides in the cell inner membrane. In Klebsiella pneumoniae subsp. pneumoniae (strain ATCC 700721 / MGH 78578), this protein is Putative multidrug resistance protein MdtD.